We begin with the raw amino-acid sequence, 303 residues long: Phosphoribosylaminoimidazole-succinocarboxamide synthase (303 aa).

It belongs to the SAICAR synthetase family.

The enzyme catalyses 5-amino-1-(5-phospho-D-ribosyl)imidazole-4-carboxylate + L-aspartate + ATP = (2S)-2-[5-amino-1-(5-phospho-beta-D-ribosyl)imidazole-4-carboxamido]succinate + ADP + phosphate + 2 H(+). The protein operates within purine metabolism; IMP biosynthesis via de novo pathway; 5-amino-1-(5-phospho-D-ribosyl)imidazole-4-carboxamide from 5-amino-1-(5-phospho-D-ribosyl)imidazole-4-carboxylate: step 1/2. This Pichia angusta (Yeast) protein is Phosphoribosylaminoimidazole-succinocarboxamide synthase (ADE1).